A 392-amino-acid polypeptide reads, in one-letter code: Small ribosomal subunit protein uS9m (392 aa).

The segment covering 8 to 25 (RSSRAMSSASPASASDSD) has biased composition (low complexity). The segment at 8 to 27 (RSSRAMSSASPASASDSDTS) is disordered.

Belongs to the universal ribosomal protein uS9 family. In terms of assembly, component of the mitochondrial ribosome small subunit (28S) which comprises a 12S rRNA and about 30 distinct proteins.

It localises to the mitochondrion. The protein is Small ribosomal subunit protein uS9m (mrps-9) of Caenorhabditis elegans.